We begin with the raw amino-acid sequence, 359 residues long: MNELVQILKNTRQHLMTGVSHMIPFVVSGGILLAVSVMLYGKGAVPDAVADPNLKKLFDIGVAGLTLMVPFLAAYIGYSIAERSALAPCAIGAWVGNSFGAGFFGALIAGIIGGIVVHYLKKIPVHKVLRSVMPIFIIPIVGTLITAGIMMWGLGEPVGALTNSLTQWLQGMQQGSIVMLAVIMGLMLAFDMGGPVNKVAYAFMLICVAQGVYTVVAIAAVGICIPPLGMGLATLIGRKNFSAEERETGKAALVMGCVGVTEGAIPFAAADPLRVIPSIMVGSVCGAVTAALVGAQCYAGWGGLIVLPVVEGKLGYIAAVAVGAVVTAVCVNVLKSLARKNGSSTDEKEDDLDLDFEIN.

Residues 11-344 (TRQHLMTGVS…KSLARKNGSS (334 aa)) enclose the PTS EIIC type-2 domain. Transmembrane regions (helical) follow at residues 19 to 39 (VSHMIPFVVSGGILLAVSVML), 60 to 80 (IGVAGLTLMVPFLAAYIGYSI), 99 to 119 (FGAGFFGALIAGIIGGIVVHY), 135 to 155 (IFIIPIVGTLITAGIMMWGLG), 176 to 196 (SIVMLAVIMGLMLAFDMGGPV), 216 to 236 (VAIAAVGICIPPLGMGLATLI), 251 to 271 (AALVMGCVGVTEGAIPFAAAD), 290 to 310 (AALVGAQCYAGWGGLIVLPVV), and 314 to 334 (LGYIAAVAVGAVVTAVCVNVL).

The protein localises to the cell inner membrane. In terms of biological role, the phosphoenolpyruvate-dependent sugar phosphotransferase system (PTS), a major carbohydrate active -transport system, catalyzes the phosphorylation of incoming sugar substrates concomitant with their translocation across the cell membrane. This is Fructose-like permease IIC component 2 (frwC) from Escherichia coli (strain K12).